A 335-amino-acid chain; its full sequence is Methyltransferase pgmE (335 aa).

Belongs to the methyltransferase superfamily.

Its pathway is pigment biosynthesis. It participates in secondary metabolite biosynthesis. Functionally, methyltransferase; part of the gene cluster that mediates the biosynthesis of pleosporalin A, ascomycone A, as well as a third cryptic naphthoquinone derived pigment, all responsible for the coloration of conidia. Essential for the production of pleosporalin A, but not the 2 other final products. The pathway begins with the biosynthesis of the cyclized heptaketide 3-acetonyl-1,6,8-trihydroxy-2-naphthaldehyde by the NR-PKS pgmA. The C-6 hydroxyl group is further methylated by the O-methyltransferase pgmB to yield fusarubinaldehyde which is in turn oxidized by the cytochrome P450 monooxygenase pgmC at C-9. The C-1 hydroxyl group is then methylated spontaneously. Although pgmE, pgmD and pgmH are essential for the production of pleosporalin A, it is not the case for the 2 other final products and it remains difficult to assign a specific function to each enzyme. PgmF and pgmG seem not to be involved in pigment biosynthesis although they were regulated by the cluster-specific transcription factor pgmR. This is Methyltransferase pgmE from Aspergillus terreus (strain NIH 2624 / FGSC A1156).